We begin with the raw amino-acid sequence, 787 residues long: Endonuclease MutS2 (787 aa).

Residue 336–343 (GPNTGGKT) coordinates ATP. The Smr domain occupies 712–787 (LDLRGVRYED…GNGATEVQFK (76 aa)).

It belongs to the DNA mismatch repair MutS family. MutS2 subfamily. In terms of assembly, homodimer. Binds to stalled ribosomes, contacting rRNA.

Endonuclease that is involved in the suppression of homologous recombination and thus may have a key role in the control of bacterial genetic diversity. Functionally, acts as a ribosome collision sensor, splitting the ribosome into its 2 subunits. Detects stalled/collided 70S ribosomes which it binds and splits by an ATP-hydrolysis driven conformational change. Acts upstream of the ribosome quality control system (RQC), a ribosome-associated complex that mediates the extraction of incompletely synthesized nascent chains from stalled ribosomes and their subsequent degradation. Probably generates substrates for RQC. The chain is Endonuclease MutS2 from Lactiplantibacillus plantarum (strain ATCC BAA-793 / NCIMB 8826 / WCFS1) (Lactobacillus plantarum).